A 398-amino-acid chain; its full sequence is tRNA-specific 2-thiouridylase MnmA (398 aa).

ATP-binding positions include alanine 20 to serine 27 and leucine 46. Catalysis depends on cysteine 114, which acts as the Nucleophile. The cysteines at positions 114 and 210 are disulfide-linked. Glycine 138 is an ATP binding site. The interaction with tRNA stretch occupies residues arginine 160 to glutamine 162. Cysteine 210 acts as the Cysteine persulfide intermediate in catalysis.

The protein belongs to the MnmA/TRMU family.

Its subcellular location is the cytoplasm. It carries out the reaction S-sulfanyl-L-cysteinyl-[protein] + uridine(34) in tRNA + AH2 + ATP = 2-thiouridine(34) in tRNA + L-cysteinyl-[protein] + A + AMP + diphosphate + H(+). Functionally, catalyzes the 2-thiolation of uridine at the wobble position (U34) of tRNA, leading to the formation of s(2)U34. This Brucella canis (strain ATCC 23365 / NCTC 10854 / RM-666) protein is tRNA-specific 2-thiouridylase MnmA.